Here is a 274-residue protein sequence, read N- to C-terminus: 3-deoxy-manno-octulosonate cytidylyltransferase (274 aa).

It belongs to the KdsB family.

It is found in the cytoplasm. The enzyme catalyses 3-deoxy-alpha-D-manno-oct-2-ulosonate + CTP = CMP-3-deoxy-beta-D-manno-octulosonate + diphosphate. It participates in nucleotide-sugar biosynthesis; CMP-3-deoxy-D-manno-octulosonate biosynthesis; CMP-3-deoxy-D-manno-octulosonate from 3-deoxy-D-manno-octulosonate and CTP: step 1/1. The protein operates within bacterial outer membrane biogenesis; lipopolysaccharide biosynthesis. In terms of biological role, activates KDO (a required 8-carbon sugar) for incorporation into bacterial lipopolysaccharide in Gram-negative bacteria. The chain is 3-deoxy-manno-octulosonate cytidylyltransferase from Bordetella avium (strain 197N).